The primary structure comprises 223 residues: Matrix protein (223 aa).

A compositionally biased stretch (basic residues) spans M1–P10. The segment at M1–R23 is disordered. Residues S14 to R23 are compositionally biased toward basic and acidic residues.

As to quaternary structure, homomultimer. Interacts with nucleoprotein and with the cytoplasmic domain of glycoprotein.

It localises to the virion membrane. The protein resides in the host endomembrane system. Functionally, plays a major role in assembly and budding of virion. Completely covers the ribonucleoprotein coil and keep it in condensed bullet-shaped form. Inhibits viral transcription and stimulates replication. This chain is Matrix protein (M), found in Bos taurus (Bovine).